The sequence spans 872 residues: Exoglucanase A (872 aa).

A signal peptide spans 1 to 40 (MSTLGKRAGVRRRVRAVATAATATALVAVPLTTLATSASA). The catalytic stretch occupies residues 41-477 (APVHVDNPYA…PVIGGTTPVE (437 aa)). Disulfide bonds link Cys140–Cys202 and Cys374–Cys428. Asp188 serves as the catalytic Proton donor. Asp410 serves as the catalytic Nucleophile. Fibronectin type-III domains follow at residues 484-569 (VPTG…TQSG), 579-667 (VPAG…TQTG), and 677-765 (VPTG…TQAA). A CBM2 domain is found at 763 to 872 (QAATSGGCTV…TLNGVACTLG (110 aa)). A disulfide bridge links Cys770 with Cys869.

It belongs to the glycosyl hydrolase 6 (cellulase B) family.

It carries out the reaction Hydrolysis of (1-&gt;4)-beta-D-glucosidic linkages in cellulose and cellotetraose, releasing cellobiose from the non-reducing ends of the chains.. Its function is as follows. This enzyme hydrolyzes 1,4-beta-D-glucosidic linkages of cellulose. Weak activity against carboxymethylcellulose, bacterial microcrystalline cellulose and barley beta-glucan. Also has weak endoglucanase activity. Hydrolyzes glucosidic bonds with inversion of anomeric configuration. This Cellulomonas fimi (strain ATCC 484 / DSM 20113 / JCM 1341 / CCUG 24087 / LMG 16345 / NBRC 15513 / NCIMB 8980 / NCTC 7547 / NRS-133) protein is Exoglucanase A (cbhA).